Consider the following 332-residue polypeptide: Ornithine carbamoyltransferase, catabolic (332 aa).

Carbamoyl phosphate contacts are provided by residues 60-63, glutamine 87, arginine 111, and 138-141; these read STRT and HPTQ. Residues asparagine 170, aspartate 230, and 234–235 contribute to the L-ornithine site; that span reads SM. Carbamoyl phosphate contacts are provided by residues 271–272 and arginine 316; that span reads CL.

The protein belongs to the aspartate/ornithine carbamoyltransferase superfamily. OTCase family.

It is found in the cytoplasm. It carries out the reaction carbamoyl phosphate + L-ornithine = L-citrulline + phosphate + H(+). The protein operates within amino-acid degradation; L-arginine degradation via ADI pathway; carbamoyl phosphate from L-arginine: step 2/2. Reversibly catalyzes the transfer of the carbamoyl group from carbamoyl phosphate (CP) to the N(epsilon) atom of ornithine (ORN) to produce L-citrulline. This is Ornithine carbamoyltransferase, catabolic (arcB) from Bacillus cereus (strain ATCC 14579 / DSM 31 / CCUG 7414 / JCM 2152 / NBRC 15305 / NCIMB 9373 / NCTC 2599 / NRRL B-3711).